Consider the following 471-residue polypeptide: ATP synthase subunit beta, chloroplastic (471 aa).

151 to 158 (GGAGVGKT) serves as a coordination point for ATP.

The protein belongs to the ATPase alpha/beta chains family. In terms of assembly, F-type ATPases have 2 components, CF(1) - the catalytic core - and CF(0) - the membrane proton channel. CF(1) has five subunits: alpha(3), beta(3), gamma(1), delta(1), epsilon(1). CF(0) has four main subunits: a(1), b(1), b'(1) and c(9-12).

Its subcellular location is the plastid. It localises to the chloroplast thylakoid membrane. The catalysed reaction is ATP + H2O + 4 H(+)(in) = ADP + phosphate + 5 H(+)(out). Functionally, produces ATP from ADP in the presence of a proton gradient across the membrane. The catalytic sites are hosted primarily by the beta subunits. This is ATP synthase subunit beta, chloroplastic from Rhodomonas salina (Cryptomonas salina).